The following is a 2772-amino-acid chain: Protein DDB_G0276689 (2772 aa).

6 disordered regions span residues 50 to 82 (QQLK…NNNN), 371 to 415 (NLET…NGKS), 475 to 514 (LDIN…KNNL), 612 to 650 (NKNN…NNNE), 685 to 708 (LRGS…DSSL), and 933 to 982 (LVNN…NNSN). Low complexity-rich tracts occupy residues 376–412 (NNNN…NNNN), 478–514 (NSKN…KNNL), 614–649 (NNNN…NNNN), and 688–708 (SFSP…DSSL). The stretch at 1065-1089 (LSKWILNLDDNNYNHIPFMSLVLMP) is one LRR 1 repeat. The segment at 1282-1319 (NNNNIDNNNNNNNNNNNNNNNNNNNNNNNNNNNNNNNN) is disordered. LRR repeat units follow at residues 1393-1416 (LSNL…TPKN) and 1543-1567 (HKDV…SFSN). Residues 1587–1619 (QNNNYNNNNYNNNYNNNNNNNNNNNNNNNNNNN) are compositionally biased toward low complexity. Residues 1587–1622 (QNNNYNNNNYNNNYNNNNNNNNNNNNNNNNNNNIDN) are disordered. One copy of the LRR 4 repeat lies at 1899-1922 (LEELTKQEIGYQVLLVLPTDLQVE). 2 stretches are compositionally biased toward polar residues: residues 1999–2011 (YVSN…NDQI) and 2073–2083 (LNIVHSTSPNS). Disordered stretches follow at residues 1999–2021 (YVSN…KDKK), 2054–2083 (EISN…SPNS), and 2367–2386 (NNSS…NNNN). The LRR 5 repeat unit spans residues 2414 to 2439 (TTIINNIEMDKNRLDEAIYYLKKYGN).

The protein is Protein DDB_G0276689 of Dictyostelium discoideum (Social amoeba).